The primary structure comprises 381 residues: 1-deoxy-D-xylulose 5-phosphate reductoisomerase (381 aa).

The NADPH site is built by Thr-10, Gly-11, Ser-12, Ile-13, Gly-36, Lys-37, Asn-38, and Asn-122. Lys-123 provides a ligand contact to 1-deoxy-D-xylulose 5-phosphate. Glu-124 provides a ligand contact to NADPH. Mn(2+) is bound at residue Asp-148. Ser-149, Glu-150, Ser-173, and His-196 together coordinate 1-deoxy-D-xylulose 5-phosphate. Residue Glu-150 coordinates Mn(2+). Gly-202 contacts NADPH. The 1-deoxy-D-xylulose 5-phosphate site is built by Ser-209, Asn-214, Lys-215, and Glu-218. Residue Glu-218 coordinates Mn(2+).

The protein belongs to the DXR family. The cofactor is Mg(2+). Requires Mn(2+) as cofactor.

The enzyme catalyses 2-C-methyl-D-erythritol 4-phosphate + NADP(+) = 1-deoxy-D-xylulose 5-phosphate + NADPH + H(+). It functions in the pathway isoprenoid biosynthesis; isopentenyl diphosphate biosynthesis via DXP pathway; isopentenyl diphosphate from 1-deoxy-D-xylulose 5-phosphate: step 1/6. Its function is as follows. Catalyzes the NADPH-dependent rearrangement and reduction of 1-deoxy-D-xylulose-5-phosphate (DXP) to 2-C-methyl-D-erythritol 4-phosphate (MEP). This is 1-deoxy-D-xylulose 5-phosphate reductoisomerase from Desulfitobacterium hafniense (strain DSM 10664 / DCB-2).